Consider the following 120-residue polypeptide: Large ribosomal subunit protein uL24 (120 aa).

The interval 1-33 is disordered; the sequence is MTRQPHKQRNRQERAALHEKQKQVRAPLSPELR. Residues 10 to 22 are compositionally biased toward basic and acidic residues; that stretch reads NRQERAALHEKQK.

The protein belongs to the universal ribosomal protein uL24 family. Part of the 50S ribosomal subunit.

One of two assembly initiator proteins, it binds directly to the 5'-end of the 23S rRNA, where it nucleates assembly of the 50S subunit. In terms of biological role, located at the polypeptide exit tunnel on the outside of the subunit. The polypeptide is Large ribosomal subunit protein uL24 (Natronomonas pharaonis (strain ATCC 35678 / DSM 2160 / CIP 103997 / JCM 8858 / NBRC 14720 / NCIMB 2260 / Gabara) (Halobacterium pharaonis)).